The following is a 251-amino-acid chain: Hydroxyacylglutathione hydrolase (251 aa).

Positions 53, 55, 57, 58, 110, 127, and 165 each coordinate Zn(2+).

This sequence belongs to the metallo-beta-lactamase superfamily. Glyoxalase II family. In terms of assembly, monomer. The cofactor is Zn(2+).

It carries out the reaction an S-(2-hydroxyacyl)glutathione + H2O = a 2-hydroxy carboxylate + glutathione + H(+). It functions in the pathway secondary metabolite metabolism; methylglyoxal degradation; (R)-lactate from methylglyoxal: step 2/2. Thiolesterase that catalyzes the hydrolysis of S-D-lactoyl-glutathione to form glutathione and D-lactic acid. This chain is Hydroxyacylglutathione hydrolase, found in Escherichia coli O9:H4 (strain HS).